We begin with the raw amino-acid sequence, 226 residues long: ATP synthase F(0) complex subunit a (226 aa).

Transmembrane regions (helical) follow at residues 12-32, 68-88, 97-117, 135-155, 164-184, and 189-209; these read PTMMGLPIVILIIMFPSILFP, WTLMLMSLILFIGSTNLLGLL, QLSMNLGMAIPLWAGTVFMGF, IFLIPMLVIIETISLFIQPMA, ITAGHLLIHLIGGATLALMDI, and ALITFIILILLTILEFAVAMI.

This sequence belongs to the ATPase A chain family. In terms of assembly, component of the ATP synthase complex composed at least of ATP5F1A/subunit alpha, ATP5F1B/subunit beta, ATP5MC1/subunit c (homooctomer), MT-ATP6/subunit a, MT-ATP8/subunit 8, ATP5ME/subunit e, ATP5MF/subunit f, ATP5MG/subunit g, ATP5MK/subunit k, ATP5MJ/subunit j, ATP5F1C/subunit gamma, ATP5F1D/subunit delta, ATP5F1E/subunit epsilon, ATP5PF/subunit F6, ATP5PB/subunit b, ATP5PD/subunit d, ATP5PO/subunit OSCP. ATP synthase complex consists of a soluble F(1) head domain (subunits alpha(3) and beta(3)) - the catalytic core - and a membrane F(0) domain - the membrane proton channel (subunits c, a, 8, e, f, g, k and j). These two domains are linked by a central stalk (subunits gamma, delta, and epsilon) rotating inside the F1 region and a stationary peripheral stalk (subunits F6, b, d, and OSCP). Interacts with DNAJC30; interaction is direct.

The protein resides in the mitochondrion inner membrane. The enzyme catalyses H(+)(in) = H(+)(out). Subunit a, of the mitochondrial membrane ATP synthase complex (F(1)F(0) ATP synthase or Complex V) that produces ATP from ADP in the presence of a proton gradient across the membrane which is generated by electron transport complexes of the respiratory chain. ATP synthase complex consist of a soluble F(1) head domain - the catalytic core - and a membrane F(1) domain - the membrane proton channel. These two domains are linked by a central stalk rotating inside the F(1) region and a stationary peripheral stalk. During catalysis, ATP synthesis in the catalytic domain of F(1) is coupled via a rotary mechanism of the central stalk subunits to proton translocation. With the subunit c (ATP5MC1), forms the proton-conducting channel in the F(0) domain, that contains two crucial half-channels (inlet and outlet) that facilitate proton movement from the mitochondrial intermembrane space (IMS) into the matrix. Protons are taken up via the inlet half-channel and released through the outlet half-channel, following a Grotthuss mechanism. This is ATP synthase F(0) complex subunit a from Equus asinus (Donkey).